A 172-amino-acid chain; its full sequence is Outer-membrane lipoprotein carrier protein (172 aa).

The signal sequence occupies residues 1 to 16 (MRIALLWVAFGALALA).

It belongs to the LolA family. As to quaternary structure, monomer.

It localises to the periplasm. Participates in the translocation of lipoproteins from the inner membrane to the outer membrane. Only forms a complex with a lipoprotein if the residue after the N-terminal Cys is not an aspartate (The Asp acts as a targeting signal to indicate that the lipoprotein should stay in the inner membrane). This chain is Outer-membrane lipoprotein carrier protein, found in Wolinella succinogenes (strain ATCC 29543 / DSM 1740 / CCUG 13145 / JCM 31913 / LMG 7466 / NCTC 11488 / FDC 602W) (Vibrio succinogenes).